A 124-amino-acid polypeptide reads, in one-letter code: Small ribosomal subunit protein bS6 (124 aa).

The interval 96–124 (ETAPSPMMKEVQREEARKAAQTTTEGQAA) is disordered. A compositionally biased stretch (polar residues) spans 115-124 (AQTTTEGQAA).

It belongs to the bacterial ribosomal protein bS6 family.

Its function is as follows. Binds together with bS18 to 16S ribosomal RNA. In Cupriavidus necator (strain ATCC 17699 / DSM 428 / KCTC 22496 / NCIMB 10442 / H16 / Stanier 337) (Ralstonia eutropha), this protein is Small ribosomal subunit protein bS6.